The chain runs to 320 residues: D-alanine--D-alanine ligase (320 aa).

Residues 101–317 form the ATP-grasp domain; that stretch reads KMIFQGAGLP…FSELVCKILS (217 aa). 148 to 203 provides a ligand contact to ATP; sequence INQLGLPLIVKPSREGSSFGMTKVEHLDQLDDALKKAWHYDEEILVEKWHFGTELT. Residues Asp271, Glu284, and Asn286 each contribute to the Mg(2+) site.

This sequence belongs to the D-alanine--D-alanine ligase family. Requires Mg(2+) as cofactor. Mn(2+) serves as cofactor.

It localises to the cytoplasm. The enzyme catalyses 2 D-alanine + ATP = D-alanyl-D-alanine + ADP + phosphate + H(+). It functions in the pathway cell wall biogenesis; peptidoglycan biosynthesis. In terms of biological role, cell wall formation. This Hamiltonella defensa subsp. Acyrthosiphon pisum (strain 5AT) protein is D-alanine--D-alanine ligase.